The primary structure comprises 292 residues: 33 kDa chaperonin (292 aa).

2 disulfide bridges follow: cysteine 230–cysteine 232 and cysteine 263–cysteine 266.

It belongs to the HSP33 family. Post-translationally, under oxidizing conditions two disulfide bonds are formed involving the reactive cysteines. Under reducing conditions zinc is bound to the reactive cysteines and the protein is inactive.

The protein localises to the cytoplasm. In terms of biological role, redox regulated molecular chaperone. Protects both thermally unfolding and oxidatively damaged proteins from irreversible aggregation. Plays an important role in the bacterial defense system toward oxidative stress. This Escherichia coli O7:K1 (strain IAI39 / ExPEC) protein is 33 kDa chaperonin.